We begin with the raw amino-acid sequence, 156 residues long: Guanine deaminase (156 aa).

One can recognise a CMP/dCMP-type deaminase domain in the interval 1 to 132 (MNHETFLKRA…KPAEERTIPF (132 aa)). His-53 is a Zn(2+) binding site. The active-site Proton donor is Glu-55. The Zn(2+) site is built by Cys-83 and Cys-86.

Belongs to the cytidine and deoxycytidylate deaminase family. Zn(2+) serves as cofactor.

The enzyme catalyses guanine + H2O + H(+) = xanthine + NH4(+). It participates in purine metabolism; guanine degradation; xanthine from guanine: step 1/1. Catalyzes the hydrolytic deamination of guanine, producing xanthine and ammonia. The polypeptide is Guanine deaminase (guaD) (Bacillus subtilis (strain 168)).